The sequence spans 110 residues: Holo-[acyl-carrier-protein] synthase (110 aa).

Mg(2+)-binding residues include Asp-8 and Glu-54.

It belongs to the P-Pant transferase superfamily. AcpS family. Mg(2+) serves as cofactor.

The protein resides in the cytoplasm. It carries out the reaction apo-[ACP] + CoA = holo-[ACP] + adenosine 3',5'-bisphosphate + H(+). Functionally, transfers the 4'-phosphopantetheine moiety from coenzyme A to a Ser of acyl-carrier-protein. The sequence is that of Holo-[acyl-carrier-protein] synthase from Mycoplasma capricolum subsp. capricolum (strain California kid / ATCC 27343 / NCTC 10154).